Here is a 415-residue protein sequence, read N- to C-terminus: MIDFLKQLPHLEPYGNPFYFIYLGIALLPIFIGLFFKKRFAIYECLVSITFIVLALTGTHASQILALLFYIVWQIIWVYSYKRYRSQRDNKWVFYLHSFLVVLPLILVKVEPTINGTQSLLNFLGISYLTFRAVGMIIEMRDGVLKEFTLGEFLRFMLFMPTFTSGPIDRFKRFNEDYQSIPNRDELLNMLEQAVKYIMLGFLYKFVLAQIFGSMLLPPLKAQALSQGGIFNLPTLGVMYVYGFDLFFDFAGYSMFALAVSNLMGIKSPINFDKPFISRDMKEFWNRWHMSLSFWFRDFVFMRLVIVLMRNKVFKNRNTTSNVAYIINMMVMGFWHGITWYYIAYGIFHGIGLVINDAWLRKKKTINKDRKKAGLKPLPENKWTKALGIFITFNTVMLSFLIFSGFLNDLWFTKK.

Topologically, residues Met-1–Asn-16 are extracellular. The helical transmembrane segment at Pro-17–Phe-36 threads the bilayer. Over Lys-37–Phe-40 the chain is Cytoplasmic. Residues Ala-41–Leu-56 traverse the membrane as a helical segment. Residues Thr-57–His-60 lie on the Extracellular side of the membrane. Residues Ala-61–Gln-87 traverse the membrane as a helical segment. Topologically, residues Arg-88–Asn-90 are cytoplasmic. A helical transmembrane segment spans residues Lys-91 to Asn-115. The Extracellular segment spans residues Gly-116–Gly-125. A helical membrane pass occupies residues Ile-126 to Asp-142. Residues Gly-143 to Thr-149 are Cytoplasmic-facing. Residues Leu-150–Gln-179 lie within the membrane without spanning it. The Cytoplasmic segment spans residues Ser-180–Asn-183. A helical membrane pass occupies residues Arg-184–Gln-227. The Extracellular segment spans residues Gly-228–Asn-232. The chain crosses the membrane as a helical span at residues Leu-233–Met-264. Over Gly-265–Lys-274 the chain is Cytoplasmic. The stretch at Pro-275 to Asn-311 is an intramembrane region. The Cytoplasmic segment spans residues Lys-312 to Asn-316. The helical transmembrane segment at Arg-317–His-336 threads the bilayer. His-336 is a catalytic residue. The Extracellular segment spans residues Gly-337 to Thr-339. A helical transmembrane segment spans residues Trp-340 to Ala-373. Topologically, residues Gly-374–Asn-381 are cytoplasmic. Residues Lys-382–Ser-404 form a helical membrane-spanning segment. Over Gly-405–Lys-415 the chain is Extracellular.

It belongs to the membrane-bound acyltransferase family.

It is found in the cell membrane. The protein operates within cell wall biogenesis; lipoteichoic acid biosynthesis. In terms of biological role, O-acyltransferase that catalyzes D-alanylation of both teichoic acid and lipoteichoic acid (LTA). D-alanylation of LTA plays an important role in modulating the properties of the cell wall in Gram-positive bacteria, influencing the net charge of the cell wall. Catalyzes D-alanylation from DltC carrier protein. The polypeptide is Teichoic acid D-alanyltransferase (Streptococcus thermophilus (strain ATCC BAA-250 / LMG 18311)).